The chain runs to 304 residues: 4-diphosphocytidyl-2-C-methyl-D-erythritol kinase (304 aa).

Residue lysine 18 is part of the active site. 103–113 is an ATP binding site; sequence PVAAGIGGGSA. The active site involves aspartate 145.

Belongs to the GHMP kinase family. IspE subfamily.

It catalyses the reaction 4-CDP-2-C-methyl-D-erythritol + ATP = 4-CDP-2-C-methyl-D-erythritol 2-phosphate + ADP + H(+). The protein operates within isoprenoid biosynthesis; isopentenyl diphosphate biosynthesis via DXP pathway; isopentenyl diphosphate from 1-deoxy-D-xylulose 5-phosphate: step 3/6. Its function is as follows. Catalyzes the phosphorylation of the position 2 hydroxy group of 4-diphosphocytidyl-2C-methyl-D-erythritol. In Rhodospirillum rubrum (strain ATCC 11170 / ATH 1.1.1 / DSM 467 / LMG 4362 / NCIMB 8255 / S1), this protein is 4-diphosphocytidyl-2-C-methyl-D-erythritol kinase.